The following is a 264-amino-acid chain: Undecaprenyl-diphosphatase (264 aa).

6 consecutive transmembrane segments (helical) span residues 41 to 61, 82 to 102, 106 to 126, 140 to 160, 213 to 233, and 244 to 264; these read NLAFTIVVHVATVCSTLVILW, YVINIVISMIPIGIVGVFFKD, AIFGSGLMIVGCMLLLTAALL, ISMKDAFIIGLAQACAVLPGL, IPALSLIVGFLAAFVAGCLAC, and KLIYFAIYCAIAGLAVIITQL.

This sequence belongs to the UppP family.

The protein localises to the cell inner membrane. The enzyme catalyses di-trans,octa-cis-undecaprenyl diphosphate + H2O = di-trans,octa-cis-undecaprenyl phosphate + phosphate + H(+). In terms of biological role, catalyzes the dephosphorylation of undecaprenyl diphosphate (UPP). Confers resistance to bacitracin. The chain is Undecaprenyl-diphosphatase from Bacteroides thetaiotaomicron (strain ATCC 29148 / DSM 2079 / JCM 5827 / CCUG 10774 / NCTC 10582 / VPI-5482 / E50).